The sequence spans 1066 residues: UPF0182 protein BL1029 (1066 aa).

A disordered region spans residues 12-74; that stretch reads GNGGDSRRNN…KPASGGSGGS (63 aa). Over residues 44-61 the composition is skewed to low complexity; that stretch reads NAGPSGSSRPPRGPANPR. The next 7 helical transmembrane spans lie at 77–97, 126–146, 179–199, 235–255, 282–302, 326–346, and 372–392; these read SKILIGVVLALAIIVGLFFGL, LWVAYALLMALTGFVSAWLAI, VAVVISLIVGVIFGSQFNANW, VLAAVAMLLGVGLVFSVVTHV, LGIWLMLNMFAWAVRQMIGVF, VTFIMAALTAILGVVLGIWLM, and VTSIAVVVVVGLVLTVAWPVL. The tract at residues 977–1044 is disordered; that stretch reads DSGAAAGDAE…SQSAMKNGDW (68 aa). A compositionally biased stretch (polar residues) spans 989 to 998; it reads SGDQSGSDTN. Residues 1003 to 1016 show a composition bias toward low complexity; the sequence is GTTDGKSDSGSSSD.

Belongs to the UPF0182 family.

The protein resides in the cell membrane. This is UPF0182 protein BL1029 from Bifidobacterium longum (strain NCC 2705).